Reading from the N-terminus, the 155-residue chain is Ribosomal RNA large subunit methyltransferase H (155 aa).

Residues Leu-72, Gly-104, and 123–128 (LAKITL) contribute to the S-adenosyl-L-methionine site.

Belongs to the RNA methyltransferase RlmH family. In terms of assembly, homodimer.

It localises to the cytoplasm. It catalyses the reaction pseudouridine(1915) in 23S rRNA + S-adenosyl-L-methionine = N(3)-methylpseudouridine(1915) in 23S rRNA + S-adenosyl-L-homocysteine + H(+). Functionally, specifically methylates the pseudouridine at position 1915 (m3Psi1915) in 23S rRNA. This Mycoplasma mycoides subsp. mycoides SC (strain CCUG 32753 / NCTC 10114 / PG1) protein is Ribosomal RNA large subunit methyltransferase H.